Here is a 165-residue protein sequence, read N- to C-terminus: Transcription antitermination protein NusB (165 aa).

The protein belongs to the NusB family.

Functionally, involved in transcription antitermination. Required for transcription of ribosomal RNA (rRNA) genes. Binds specifically to the boxA antiterminator sequence of the ribosomal RNA (rrn) operons. The polypeptide is Transcription antitermination protein NusB (Rhodococcus erythropolis (strain PR4 / NBRC 100887)).